The chain runs to 227 residues: Cytochrome c oxidase subunit 2 (227 aa).

The Mitochondrial intermembrane portion of the chain corresponds to 1-14 (MAYPLQLGLQDATS). The helical transmembrane segment at 15–45 (PIMEELMNFHDHTLMIVFLISSLVLYIISLM) threads the bilayer. The Mitochondrial matrix segment spans residues 46–59 (LTTKLTHTSTMDAQ). The chain crosses the membrane as a helical span at residues 60 to 87 (EVETIWTILPAVILIMIALPSLRILYMM). The Mitochondrial intermembrane segment spans residues 88–227 (DEINNPVLTV…HFENWSASMI (140 aa)). Cu cation-binding residues include H161, C196, E198, C200, H204, and M207. A Mg(2+)-binding site is contributed by E198.

It belongs to the cytochrome c oxidase subunit 2 family. Component of the cytochrome c oxidase (complex IV, CIV), a multisubunit enzyme composed of 14 subunits. The complex is composed of a catalytic core of 3 subunits MT-CO1, MT-CO2 and MT-CO3, encoded in the mitochondrial DNA, and 11 supernumerary subunits COX4I, COX5A, COX5B, COX6A, COX6B, COX6C, COX7A, COX7B, COX7C, COX8 and NDUFA4, which are encoded in the nuclear genome. The complex exists as a monomer or a dimer and forms supercomplexes (SCs) in the inner mitochondrial membrane with NADH-ubiquinone oxidoreductase (complex I, CI) and ubiquinol-cytochrome c oxidoreductase (cytochrome b-c1 complex, complex III, CIII), resulting in different assemblies (supercomplex SCI(1)III(2)IV(1) and megacomplex MCI(2)III(2)IV(2)). Found in a complex with TMEM177, COA6, COX18, COX20, SCO1 and SCO2. Interacts with TMEM177 in a COX20-dependent manner. Interacts with COX20. Interacts with COX16. Cu cation serves as cofactor.

It is found in the mitochondrion inner membrane. It catalyses the reaction 4 Fe(II)-[cytochrome c] + O2 + 8 H(+)(in) = 4 Fe(III)-[cytochrome c] + 2 H2O + 4 H(+)(out). Its function is as follows. Component of the cytochrome c oxidase, the last enzyme in the mitochondrial electron transport chain which drives oxidative phosphorylation. The respiratory chain contains 3 multisubunit complexes succinate dehydrogenase (complex II, CII), ubiquinol-cytochrome c oxidoreductase (cytochrome b-c1 complex, complex III, CIII) and cytochrome c oxidase (complex IV, CIV), that cooperate to transfer electrons derived from NADH and succinate to molecular oxygen, creating an electrochemical gradient over the inner membrane that drives transmembrane transport and the ATP synthase. Cytochrome c oxidase is the component of the respiratory chain that catalyzes the reduction of oxygen to water. Electrons originating from reduced cytochrome c in the intermembrane space (IMS) are transferred via the dinuclear copper A center (CU(A)) of subunit 2 and heme A of subunit 1 to the active site in subunit 1, a binuclear center (BNC) formed by heme A3 and copper B (CU(B)). The BNC reduces molecular oxygen to 2 water molecules using 4 electrons from cytochrome c in the IMS and 4 protons from the mitochondrial matrix. This chain is Cytochrome c oxidase subunit 2 (MT-CO2), found in Zelotomys hildegardeae (Hildegarde's broad-headed mouse).